A 462-amino-acid polypeptide reads, in one-letter code: Retinoic acid receptor RXR-alpha (462 aa).

Residues 1 to 107 (MDTKHFLPLD…MNPVSSSEDI (107 aa)) form a disordered region. A modulating region spans residues 1–134 (MDTKHFLPLD…GNMASFTKHI (134 aa)). A Glycyl lysine isopeptide (Lys-Gly) (interchain with G-Cter in SUMO2) cross-link involves residue Lys-4. Residues 11-24 (FSTQVNSSLTSPTG) are compositionally biased toward polar residues. Phosphoserine occurs at positions 21 and 27. Positions 49–58 (SPISTLSSPI) are enriched in polar residues. Ser-56 and Ser-70 each carry phosphoserine; by MAPK8 and MAPK9. A compositionally biased stretch (polar residues) spans 78–104 (SVPTTPTLGFSTGSPQLSSPMNPVSSS). The residue at position 82 (Thr-82) is a Phosphothreonine; by MAPK8 and MAPK9. Lys-108 participates in a covalent cross-link: Glycyl lysine isopeptide (Lys-Gly) (interchain with G-Cter in SUMO). Ser-129 is subject to Phosphoserine. The Zn(2+) site is built by Cys-135 and Cys-138. The NR C4-type zinc-finger motif lies at 135–155 (CAICGDRSSGKHYGVYSCEGC). The nuclear receptor DNA-binding region spans 135–200 (CAICGDRSSG…RYQKCLAMGM (66 aa)). At Lys-145 the chain carries N6-acetyllysine; by EP300. Zn(2+) contacts are provided by Cys-152 and Cys-155. Residues 160 to 165 (KRTVRK) form a nuclear localization signal region. Cys-171, Cys-177, Cys-187, and Cys-190 together coordinate Zn(2+). Residues 171–195 (CRDNKDCLIDKRQRNRCQYCRYQKC) form an NR C4-type zinc finger. The interval 201–224 (KREAVQEERQRGKDRNENEVESTS) is hinge. Over residues 206–218 (QEERQRGKDRNEN) the composition is skewed to basic and acidic residues. Residues 206–228 (QEERQRGKDRNENEVESTSSANE) are disordered. Residues 227–458 (NEDMPVERIL…TFLMEMLEAP (232 aa)) form the NR LBD domain. Position 259 is a phosphoserine (Ser-259). Ser-260 is subject to Phosphoserine; by MAPK8 and MAPK9. 9-cis-retinoate is bound by residues Arg-316 and Ala-327. 2 residues coordinate all-trans-retinoate: Arg-316 and Ala-327. A required for nuclear export region spans residues 348–368 (RVLTELVSKMRDMQMDKTELG).

The protein belongs to the nuclear hormone receptor family. NR2 subfamily. As to quaternary structure, homodimer. Heterodimer (via C-terminus) with RARA; required for ligand-dependent retinoic acid receptor transcriptional activity; association with RARA is enhanced by pulsatile shear stress. Heterodimer with PPARA (via the leucine-like zipper in the LBD); the interaction is required for PPARA transcriptional activity. Heterodimerizes with PPARG. Heterodimerizes (via NR LBD) with RARB. Heterodimerizes with NR1H4; the heterodimerization enhances the binding affinity for LXXLL motifs from coactivators. Interacts with NCOA3 and NCOA6 coactivators. Interacts with coactivator FAM120B. Interacts with coactivator PELP1, SENP6, SFPQ, DNTTIP2 and RNF8. Interacts with PRMT2. Interacts with ASXL1. Interacts with BHLHE40/DEC1, BHLHE41/DEC2, NCOR1 and NCOR2. Interacts in a ligand-dependent fashion with MED1 and NCOA1. Interacts with VDR. Interacts with EP300; the interaction is decreased by 9-cis retinoic acid. Heterodimer (via C-terminus) with NR4A1 (via DNA-binding domain); DNA-binding of the heterodimer is enhanced by 9-cis retinoic acid. NR4A1 competes with EP300 for interaction with RXRA and thereby attenuates EP300 mediated acetylation of RXRA. In the absence of hormonal ligand, interacts with TACC1. Interacts ith IGFBP3. In terms of assembly, (Microbial infection) Interacts (via the DNA binding domain) with HCV core protein; the interaction enhances the transcriptional activities of the RXRA/RARA and the RXRA/PPARA heterodimers. Acetylated by EP300; acetylation enhances DNA binding and transcriptional activity. Post-translationally, phosphorylated on serine and threonine residues mainly in the N-terminal modulating domain. Constitutively phosphorylated on Ser-21 in the presence or absence of ligand. Under stress conditions, hyperphosphorylated by activated JNK on Ser-56, Ser-70, Thr-82 and Ser-260. Phosphorylated on Ser-27, in vitro, by PKA. This phosphorylation is required for repression of cAMP-mediated transcriptional activity of RARA. In terms of processing, ubiquitinated by UBR5, leading to its degradation: UBR5 specifically recognizes and binds ligand-bound RXRA when it is not associated with coactivators (NCOAs). In presence of NCOAs, the UBR5-degron is not accessible, preventing its ubiquitination and degradation. Sumoylation negatively regulates transcriptional activity. Desumoylated specifically by SENP6. In terms of tissue distribution, expressed in lung fibroblasts (at protein level). Expressed in monocytes. Highly expressed in liver, also found in kidney and brain.

The protein localises to the nucleus. It is found in the cytoplasm. The protein resides in the mitochondrion. Its function is as follows. Receptor for retinoic acid that acts as a transcription factor. Forms homo- or heterodimers with retinoic acid receptors (RARs) and binds to target response elements in response to their ligands, all-trans or 9-cis retinoic acid, to regulate gene expression in various biological processes. The RAR/RXR heterodimers bind to the retinoic acid response elements (RARE) composed of tandem 5'-AGGTCA-3' sites known as DR1-DR5 to regulate transcription. The high affinity ligand for retinoid X receptors (RXRs) is 9-cis retinoic acid. In the absence of ligand, the RXR-RAR heterodimers associate with a multiprotein complex containing transcription corepressors that induce histone deacetylation, chromatin condensation and transcriptional suppression. On ligand binding, the corepressors dissociate from the receptors and coactivators are recruited leading to transcriptional activation. Serves as a common heterodimeric partner for a number of nuclear receptors, such as RARA, RARB and PPARA. The RXRA/RARB heterodimer can act as a transcriptional repressor or transcriptional activator, depending on the RARE DNA element context. The RXRA/PPARA heterodimer is required for PPARA transcriptional activity on fatty acid oxidation genes such as ACOX1 and the P450 system genes. Together with RARA, positively regulates microRNA-10a expression, thereby inhibiting the GATA6/VCAM1 signaling response to pulsatile shear stress in vascular endothelial cells. Acts as an enhancer of RARA binding to RARE DNA element. May facilitate the nuclear import of heterodimerization partners such as VDR and NR4A1. Promotes myelin debris phagocytosis and remyelination by macrophages. Plays a role in the attenuation of the innate immune system in response to viral infections, possibly by negatively regulating the transcription of antiviral genes such as type I IFN genes. Involved in the regulation of calcium signaling by repressing ITPR2 gene expression, thereby controlling cellular senescence. This chain is Retinoic acid receptor RXR-alpha (RXRA), found in Homo sapiens (Human).